An 83-amino-acid polypeptide reads, in one-letter code: MSSGGLFLLLGLLTLWEVLTPVSSKDRPKFCELPADSGSCKGNFQAFYYHPVHRTCLEFIYGGCEGNDNNFKTIDECKRTCAT.

Positions 1 to 24 (MSSGGLFLLLGLLTLWEVLTPVSS) are cleaved as a signal peptide. The 51-residue stretch at 31 to 81 (CELPADSGSCKGNFQAFYYHPVHRTCLEFIYGGCEGNDNNFKTIDECKRTC) folds into the BPTI/Kunitz inhibitor domain. 3 disulfide bridges follow: Cys31-Cys81, Cys40-Cys64, and Cys56-Cys77.

The protein belongs to the venom Kunitz-type family. Expressed by the venom gland.

It localises to the secreted. In terms of biological role, serine protease inhibitor that acts against trypsin (EC(50)=10 nM, Ki=5nM), and plasmin (EC(50)=200 nM, Ki=100 nM). The chain is Kunitz serine protease inhibitor Pr-mulgin 3 from Pseudechis rossignolii (Papuan pigmy mulga snake).